Here is a 317-residue protein sequence, read N- to C-terminus: Probable cell division protein WhiA (317 aa).

Positions 281-314 (SLKELGQMLDPPVGKSGINHRLRRIEKIAEELRK) form a DNA-binding region, H-T-H motif.

The protein belongs to the WhiA family.

In terms of biological role, involved in cell division and chromosome segregation. In Clostridium novyi (strain NT), this protein is Probable cell division protein WhiA.